The primary structure comprises 77 residues: Conotoxin G11.1 (77 aa).

The first 20 residues, 1-20 (MKLFLAIVLILMLQFLSTGA), serve as a signal peptide directing secretion. The propeptide occupies 21 to 45 (ETSDNHASRSTTALRDWLLGPKAKR). Disulfide bonds link C46/C60, C53/C65, C59/C69, and C64/C76.

It belongs to the conotoxin I3 superfamily. In terms of tissue distribution, expressed by the venom duct.

It is found in the secreted. Functionally, may embed in the membrane and bind to the voltage sensor domain of a ion channel. Does not induce paralysis when injected in fish, leading to the hypothesis that it may be part of the sedative nirvana cabal. The polypeptide is Conotoxin G11.1 (Conus geographus (Geography cone)).